The primary structure comprises 91 residues: UPF0386 protein CC_0226 (91 aa).

This sequence belongs to the UPF0386 family.

The sequence is that of UPF0386 protein CC_0226 from Caulobacter vibrioides (strain ATCC 19089 / CIP 103742 / CB 15) (Caulobacter crescentus).